We begin with the raw amino-acid sequence, 185 residues long: Ribosome-recycling factor (185 aa).

The interval 143–163 (EKEKLISEDDNKKGMDDIQKE) is disordered.

This sequence belongs to the RRF family.

It localises to the cytoplasm. In terms of biological role, responsible for the release of ribosomes from messenger RNA at the termination of protein biosynthesis. May increase the efficiency of translation by recycling ribosomes from one round of translation to another. The polypeptide is Ribosome-recycling factor (Syntrophomonas wolfei subsp. wolfei (strain DSM 2245B / Goettingen)).